Here is a 432-residue protein sequence, read N- to C-terminus: Adenylosuccinate synthetase (432 aa).

GTP contacts are provided by residues glycine 13–lysine 19 and glycine 41–threonine 43. Catalysis depends on aspartate 14, which acts as the Proton acceptor. Residues aspartate 14 and glycine 41 each coordinate Mg(2+). Residues aspartate 14–lysine 17, asparagine 39–histidine 42, threonine 130, arginine 144, glutamine 225, threonine 240, and arginine 304 each bind IMP. Histidine 42 functions as the Proton donor in the catalytic mechanism. Alanine 300–arginine 306 is a substrate binding site. GTP contacts are provided by residues arginine 306, lysine 332–aspartate 334, and serine 415–glycine 417.

Belongs to the adenylosuccinate synthetase family. In terms of assembly, homodimer. The cofactor is Mg(2+).

The protein resides in the cytoplasm. It catalyses the reaction IMP + L-aspartate + GTP = N(6)-(1,2-dicarboxyethyl)-AMP + GDP + phosphate + 2 H(+). Its pathway is purine metabolism; AMP biosynthesis via de novo pathway; AMP from IMP: step 1/2. Plays an important role in the de novo pathway of purine nucleotide biosynthesis. Catalyzes the first committed step in the biosynthesis of AMP from IMP. The sequence is that of Adenylosuccinate synthetase from Alteromonas mediterranea (strain DSM 17117 / CIP 110805 / LMG 28347 / Deep ecotype).